Consider the following 525-residue polypeptide: MALDIHAHRILILDFGSQYTQLIARRVREIGVYCELHPFDMDDEAIREFNPRGIILAGGPESVHEANSPRAPQAVFDLNVPVLGICYGMQTMAEQMGGKVEGSDLREFGYARVDVVGKSRLLDGIEDHVDDDGVLGLDVWMSHGDKVTQMPGNFNILASTPSCPIAGMYDDARGYYGVQFHPEVTHTKQGGRILSRFVQDICGCEALWTASNIVEDAIAQVRAQVGSANVLLGLSGGVDSSVVAALLHRAIGDQLTCVFVDNGLLRLHEGDQVMAMFKENMGVKVIRADAEKQFLDNLEGEADPEKKRKIIGRTFIDIFDAEASKLENIQFLAQGTIYPDVIESAGAKSGKAHVIKSHHNVGGLPEEMNLKLVEPLRELFKDEVRKIGLELGLPYDMVYRHPFPGPGLGVRILGEVKKEYADILRRADHIFIEELRKADWYHKTSQAFVVFQPVKSVGVVGDGRRYAWVVALRAVETVDFMTARWAHLPYELLETVSGRIINEIDGISRVTYDVSSKPPATIEWE.

The region spanning 9–207 (RILILDFGSQ…VQDICGCEAL (199 aa)) is the Glutamine amidotransferase type-1 domain. Residue cysteine 86 is the Nucleophile of the active site. Residues histidine 181 and glutamate 183 contribute to the active site. The GMPS ATP-PPase domain occupies 208–400 (WTASNIVEDA…LGLPYDMVYR (193 aa)). 235–241 (SGGVDSS) contributes to the ATP binding site.

As to quaternary structure, homodimer.

The enzyme catalyses XMP + L-glutamine + ATP + H2O = GMP + L-glutamate + AMP + diphosphate + 2 H(+). It functions in the pathway purine metabolism; GMP biosynthesis; GMP from XMP (L-Gln route): step 1/1. Catalyzes the synthesis of GMP from XMP. This Pseudomonas putida (strain GB-1) protein is GMP synthase [glutamine-hydrolyzing].